Here is a 94-residue protein sequence, read N- to C-terminus: Putative regulatory protein THA_332 (94 aa).

This sequence belongs to the RemA family.

This chain is Putative regulatory protein THA_332, found in Thermosipho africanus (strain TCF52B).